We begin with the raw amino-acid sequence, 788 residues long: Patatin-like phospholipase domain-containing protein DEHA2B04136g (788 aa).

The helical transmembrane segment at 136–156 threads the bilayer; the sequence is WPILIFISCWISLLCFMYIIV. Residues 311–503 form the PNPLA domain; sequence LCLSGGACFT…RTDIPIDALN (193 aa). The GXSXG motif lies at 342 to 346; sequence GTSGG. The active-site Nucleophile is the Ser344. The active-site Proton acceptor is Asp490. The segment covering 662–672 has biased composition (polar residues); it reads ANFNTLTSSDS. Residues 662–771 are disordered; that stretch reads ANFNTLTSSD…DTGSRFLKSF (110 aa). Composition is skewed to acidic residues over residues 690-705 and 723-749; these read MFDDDEYDSDSSDDEV and EDGDDDEDAYEYYDDDDYGLSTEDEAN.

This sequence belongs to the PLPL family.

Its subcellular location is the membrane. Functionally, probable lipid hydrolase. The polypeptide is Patatin-like phospholipase domain-containing protein DEHA2B04136g (Debaryomyces hansenii (strain ATCC 36239 / CBS 767 / BCRC 21394 / JCM 1990 / NBRC 0083 / IGC 2968) (Yeast)).